Reading from the N-terminus, the 599-residue chain is Sulfite reductase [NADPH] flavoprotein alpha-component (599 aa).

The Flavodoxin-like domain occupies 64 to 202 (VTLISASQTG…AASEWRARVV (139 aa)). FMN contacts are provided by residues 70 to 75 (SQTGNA), 117 to 120 (STQG), and 153 to 162 (LGDTSYEFFC). The FAD-binding FR-type domain maps to 234-448 (DAPLAATLSV…IEHNDNFRLP (215 aa)). FAD contacts are provided by residues Thr-322, Ala-356, 386-389 (RLYS), 404-406 (TVG), Tyr-410, and 419-422 (GGAS). Residues 519 to 520 (SR), 525 to 529 (KIYVQ), and Asp-561 each bind NADP(+). Tyr-599 provides a ligand contact to FAD.

This sequence belongs to the NADPH-dependent sulphite reductase flavoprotein subunit CysJ family. The protein in the N-terminal section; belongs to the flavodoxin family. In the C-terminal section; belongs to the flavoprotein pyridine nucleotide cytochrome reductase family. In terms of assembly, alpha(8)-beta(8). The alpha component is a flavoprotein, the beta component is a hemoprotein. FAD serves as cofactor. Requires FMN as cofactor.

The enzyme catalyses hydrogen sulfide + 3 NADP(+) + 3 H2O = sulfite + 3 NADPH + 4 H(+). Its pathway is sulfur metabolism; hydrogen sulfide biosynthesis; hydrogen sulfide from sulfite (NADPH route): step 1/1. In terms of biological role, component of the sulfite reductase complex that catalyzes the 6-electron reduction of sulfite to sulfide. This is one of several activities required for the biosynthesis of L-cysteine from sulfate. The flavoprotein component catalyzes the electron flow from NADPH -&gt; FAD -&gt; FMN to the hemoprotein component. The sequence is that of Sulfite reductase [NADPH] flavoprotein alpha-component from Salmonella paratyphi B (strain ATCC BAA-1250 / SPB7).